Here is a 1019-residue protein sequence, read N- to C-terminus: StAR-related lipid transfer protein 8 (1019 aa).

2 disordered regions span residues 92–122 and 134–154; these read QPLL…KVKK and SLRR…CLAT. Residues 100-115 are compositionally biased toward polar residues; it reads SPSNQPFLSPPQGQEG. Position 108 is a phosphoserine (Ser-108). Positions 134-147 are enriched in basic and acidic residues; sequence SLRRKEKGDSRQTE. Arg-168 is subject to Asymmetric dimethylarginine. Phosphoserine occurs at positions 234 and 237. Disordered regions lie at residues 325-355 and 406-482; these read MYPD…EVAT and APAQ…VGAS. The span at 334–347 shows a compositional bias: acidic residues; sequence KEEEEEEEEEEEEA. Composition is skewed to polar residues over residues 418–430 and 437–455; these read NSTA…SSLS and ISDT…NSMN. Ser-494 and Ser-502 each carry phosphoserine. The Rho-GAP domain maps to 569 to 773; sequence PPLIHVQRTG…HMISDCKKLF (205 aa). Residues 731-754 form a disordered region; the sequence is DSSSPRIKSKRSLVGRPGPRDLSE. Residues 805 to 1013 enclose the START domain; that stretch reads AQAAGVSLSL…RDSFPTLQAA (209 aa).

In terms of assembly, binds both the SH2 and PTB domains of TNS1.

It localises to the cell junction. It is found in the focal adhesion. Accelerates GTPase activity of RHOA and CDC42, but not RAC1. Stimulates the hydrolysis of phosphatidylinositol 4,5-bisphosphate by PLCD1. The chain is StAR-related lipid transfer protein 8 (Stard8) from Mus musculus (Mouse).